The primary structure comprises 567 residues: Type II secretion system protein E (567 aa).

An ATP-binding site is contributed by 325 to 332 (GPTGSGKT).

Belongs to the GSP E family. As to quaternary structure, forms homooligomers; most probably hexamers. Interacts with XpsL/GspL.

It is found in the cell inner membrane. It carries out the reaction ATP + H2O + cellular proteinSide 1 = ADP + phosphate + cellular proteinSide 2.. Functionally, ATPase component of the type II secretion system required for the energy-dependent secretion of extracellular factors such as proteases and toxins from the periplasm. Acts as a molecular motor to provide the energy that is required for assembly of the pseudopilus and the extrusion of substrates generated in the cytoplasm. The protein is Type II secretion system protein E (xpsE) of Xanthomonas campestris pv. campestris (strain ATCC 33913 / DSM 3586 / NCPPB 528 / LMG 568 / P 25).